Consider the following 543-residue polypeptide: Zinc finger protein 280B (543 aa).

M1 carries the post-translational modification N-acetylmethionine. Residues 1–10 are compositionally biased toward acidic residues; sequence MEQSCEEEKE. Residues 1 to 23 are disordered; sequence MEQSCEEEKEPEPQKNIQETKQV. Phosphoserine is present on residues S68 and S70. A disordered region spans residues 105-138; sequence SQLESRSTDSPIIIEPLSKPDYRNSSPQVVPNNS. Positions 128–138 are enriched in low complexity; sequence NSSPQVVPNNS. Residues K173, K247, and K261 each participate in a glycyl lysine isopeptide (Lys-Gly) (interchain with G-Cter in SUMO2) cross-link. 4 consecutive C2H2-type zinc fingers follow at residues 343–366, 373–396, 432–454, and 460–483; these read TTCQ…ENVH, TVCK…KDHH, LLCP…YRGH, and HQCS…TQCH. Residues 518–543 are disordered; the sequence is ASITVSTSDSEPSLPRSKSKISKKSH. Basic residues predominate over residues 534–543; that stretch reads SKSKISKKSH.

Its subcellular location is the nucleus. In terms of biological role, may function as a transcription factor. The chain is Zinc finger protein 280B (ZNF280B) from Homo sapiens (Human).